Consider the following 112-residue polypeptide: Larval cuticle protein 4 (112 aa).

Residues 1–16 (MFKILLVCALVALVAA) form the signal peptide. The Chitin-binding type R&amp;R domain maps to 31-92 (ADGFVSKLVL…PQSDLLPTPP (62 aa)).

In terms of biological role, component of the larval cuticle. This chain is Larval cuticle protein 4 (Lcp4), found in Drosophila melanogaster (Fruit fly).